A 412-amino-acid polypeptide reads, in one-letter code: MSYITKQDKVIAEAIEREFQRQNSNIELIASENFVSEAVMEAQGSVLTNKYAEGYPGRRYYGGCEFVDVTESIAIDRAKALFGAEHVNVQPHSGSQANMAVYLVALEMGDTVLGMNLSHGGHLTHGAPVNFSGKFYNFVEYGVDKDTERINYDEVRKLALEHKPKLIVAGASAYSRTIDFKKFKEIADEVNAKLMVDMAHIAGLVAAGLHPNPVEYADFVTTTTHKTLRGPRGGMILCKEEYKKDIDKTIFPGIQGGPLEHVIAAKAVAFGEALENNFKTYQQQVVKNAKVLAEALINEGFRIVSGGTDNHLVAVDVKGSIGLTGKEAEETLDSVGITCNKNTIPFDQEKPFVTSGIRLGTPAATTRGFDEKAFEEVAKIISLALKNSKDEEKLQQAKERVAKLTAEYPLYQ.

(6S)-5,6,7,8-tetrahydrofolate-binding positions include L117 and 121–123; that span reads GHL. K226 carries the N6-(pyridoxal phosphate)lysine modification.

This sequence belongs to the SHMT family. As to quaternary structure, homodimer. Pyridoxal 5'-phosphate is required as a cofactor.

It is found in the cytoplasm. It catalyses the reaction (6R)-5,10-methylene-5,6,7,8-tetrahydrofolate + glycine + H2O = (6S)-5,6,7,8-tetrahydrofolate + L-serine. The protein operates within one-carbon metabolism; tetrahydrofolate interconversion. Its pathway is amino-acid biosynthesis; glycine biosynthesis; glycine from L-serine: step 1/1. Functionally, catalyzes the reversible interconversion of serine and glycine with tetrahydrofolate (THF) serving as the one-carbon carrier. This reaction serves as the major source of one-carbon groups required for the biosynthesis of purines, thymidylate, methionine, and other important biomolecules. Also exhibits THF-independent aldolase activity toward beta-hydroxyamino acids, producing glycine and aldehydes, via a retro-aldol mechanism. In Staphylococcus aureus (strain MW2), this protein is Serine hydroxymethyltransferase.